A 296-amino-acid polypeptide reads, in one-letter code: CRISPR-associated endonuclease Cas1 2 (296 aa).

Mn(2+)-binding residues include glutamate 157, histidine 224, and aspartate 237.

Belongs to the CRISPR-associated endonuclease Cas1 family. As to quaternary structure, homodimer, forms a heterotetramer with a Cas2 homodimer. Mg(2+) serves as cofactor. Mn(2+) is required as a cofactor.

Functionally, CRISPR (clustered regularly interspaced short palindromic repeat), is an adaptive immune system that provides protection against mobile genetic elements (viruses, transposable elements and conjugative plasmids). CRISPR clusters contain spacers, sequences complementary to antecedent mobile elements, and target invading nucleic acids. CRISPR clusters are transcribed and processed into CRISPR RNA (crRNA). Acts as a dsDNA endonuclease. Involved in the integration of spacer DNA into the CRISPR cassette. In Chlorobaculum tepidum (strain ATCC 49652 / DSM 12025 / NBRC 103806 / TLS) (Chlorobium tepidum), this protein is CRISPR-associated endonuclease Cas1 2.